The chain runs to 118 residues: Co-chaperonin GroES (118 aa).

Belongs to the GroES chaperonin family. As to quaternary structure, heptamer of 7 subunits arranged in a ring. Interacts with the chaperonin GroEL.

It localises to the cytoplasm. Its function is as follows. Together with the chaperonin GroEL, plays an essential role in assisting protein folding. The GroEL-GroES system forms a nano-cage that allows encapsulation of the non-native substrate proteins and provides a physical environment optimized to promote and accelerate protein folding. GroES binds to the apical surface of the GroEL ring, thereby capping the opening of the GroEL channel. The polypeptide is Co-chaperonin GroES (Helicobacter acinonychis (strain Sheeba)).